A 277-amino-acid chain; its full sequence is Myelin proteolipid protein (277 aa).

Residues 2–10 (GLLECCARC) are Cytoplasmic-facing. S-palmitoyl cysteine attachment occurs at residues cysteine 6, cysteine 7, and cysteine 10. A helical membrane pass occupies residues 11 to 36 (LIGAPFASLVATGLCFFGVALFCGCG). The Extracellular portion of the chain corresponds to 37–59 (HEALTGTEQLIETYFSKNYQDYE). Residues 60–88 (FLIDVIHGFQYFIYGTAAFFFLYGALLLA) traverse the membrane as a helical segment. Over 89 to 151 (EGFYTTGAVR…LGKWLGHPDK (63 aa)) the chain is Cytoplasmic. Residues cysteine 109, cysteine 139, and cysteine 141 are each lipidated (S-palmitoyl cysteine). The chain crosses the membrane as a helical span at residues 152–178 (FVGITYVLTIIWLLVFACSAVPVYIYF). The Extracellular portion of the chain corresponds to 179 to 238 (NTWTTCQSIGNPTKTSASIGTLCADARMYGILPWNAFPGKVCGSNLLSICKTSEFQMTFH). Cystine bridges form between cysteine 184–cysteine 228 and cysteine 201–cysteine 220. Residue threonine 199 is the site of O-palmitoyl threonine attachment. Residues 239-268 (LFIAAFVGAAATLVSLVTFIIATTYNFAVL) form a helical membrane-spanning segment. Over 269 to 277 (RLMGRGTKF) the chain is Cytoplasmic.

Belongs to the myelin proteolipid protein family.

Its subcellular location is the cell membrane. Functionally, this is the major myelin protein from the central nervous system. It plays an important role in the formation or maintenance of the multilamellar structure of myelin. The protein is Myelin proteolipid protein (PLP1) of Taeniopygia guttata (Zebra finch).